A 94-amino-acid chain; its full sequence is MTIYVGNLSYRATEADLKAVFADYGEVKRVVLPTDRETGRMRGFAFVEMNEDAQEDAAITELDGAEWMGRQLRVNKAKPREDDRRGSWGKKQDY.

An RRM domain is found at 2-79 (TIYVGNLSYR…RQLRVNKAKP (78 aa)). The disordered stretch occupies residues 73–94 (RVNKAKPREDDRRGSWGKKQDY). Positions 78-94 (KPREDDRRGSWGKKQDY) are enriched in basic and acidic residues.

This is Putative RNA-binding protein RbpD (rbpD) from Nostoc sp. (strain PCC 7120 / SAG 25.82 / UTEX 2576).